Reading from the N-terminus, the 441-residue chain is Amino-acid acetyltransferase (441 aa).

Positions 295-434 (EQVRRATIND…QELYNYQRRS (140 aa)) constitute an N-acetyltransferase domain.

It belongs to the acetyltransferase family. ArgA subfamily. In terms of assembly, homohexamer.

It localises to the cytoplasm. It carries out the reaction L-glutamate + acetyl-CoA = N-acetyl-L-glutamate + CoA + H(+). It participates in amino-acid biosynthesis; L-arginine biosynthesis; N(2)-acetyl-L-ornithine from L-glutamate: step 1/4. This chain is Amino-acid acetyltransferase, found in Yersinia enterocolitica serotype O:8 / biotype 1B (strain NCTC 13174 / 8081).